Reading from the N-terminus, the 270-residue chain is tRNA pseudouridine synthase A (270 aa).

Asp-60 acts as the Nucleophile in catalysis. The segment at 107–111 is RNA binding; the sequence is FHARF. Position 118 (Tyr-118) interacts with substrate. Positions 168–172 are interaction with tRNA; that stretch reads QCQSR.

This sequence belongs to the tRNA pseudouridine synthase TruA family. As to quaternary structure, homodimer.

The enzyme catalyses uridine(38/39/40) in tRNA = pseudouridine(38/39/40) in tRNA. In terms of biological role, formation of pseudouridine at positions 38, 39 and 40 in the anticodon stem and loop of transfer RNAs. The protein is tRNA pseudouridine synthase A of Escherichia coli O9:H4 (strain HS).